The chain runs to 571 residues: Serine/threonine-protein kinase Nek7 (571 aa).

Residues 19–277 (YHVVEQVRRG…LRNPSLQPYL (259 aa)) form the Protein kinase domain. ATP-binding positions include 25–33 (VRRGKSSSD) and K48. The active-site Proton acceptor is D144. Disordered regions lie at residues 298–321 (SPKD…SREK) and 338–363 (TETG…ETKR). Residues 312–321 (FGKERVSREK) are compositionally biased toward basic and acidic residues. Residues 342–351 (SSSSSQPASS) show a composition bias toward low complexity.

This sequence belongs to the protein kinase superfamily. NEK Ser/Thr protein kinase family. NIMA subfamily.

It carries out the reaction L-seryl-[protein] + ATP = O-phospho-L-seryl-[protein] + ADP + H(+). It catalyses the reaction L-threonyl-[protein] + ATP = O-phospho-L-threonyl-[protein] + ADP + H(+). Its function is as follows. May be involved in plant development processes. The protein is Serine/threonine-protein kinase Nek7 (NEK7) of Arabidopsis thaliana (Mouse-ear cress).